A 194-amino-acid polypeptide reads, in one-letter code: Extracellular globin-E1 (194 aa).

2 Globin domains span residues 1–45 (DISH…MGLS) and 55–194 (GLSG…LRQA). Position 150 (His-150) interacts with heme b.

The protein belongs to the globin family. Artemia hemoglobin is a dimer of two similar sized subunits. Each subunit represents a globin chain which exists in two forms (alpha and beta), thus making possible three different phenotypes (HB1, alpha(2), HB2, alpha/beta, HB3, beta(2)). The globin chain is a polymer of eight heme-binding covalently linked domains.

This is Extracellular globin-E1 from Artemia sp. (Brine shrimp).